A 466-amino-acid chain; its full sequence is Probable WRKY transcription factor 32 (466 aa).

Disordered regions lie at residues 1-45 and 140-166; these read MEED…MEDL and SVPTKQEQRSDSPVVNRLSVTPVPRTP. Over residues 8–38 the composition is skewed to basic and acidic residues; sequence DEAKTYTVEKSEKVEPEKDGLSQFRDEEKSL. The WRKY 1 DNA-binding region spans 162–226; that stretch reads VPRTPARDGY…NKGLHTHEPP (65 aa). Cys193, Cys198, His221, and His223 together coordinate Zn(2+). Residues 284–317 are disordered; that stretch reads HCENEAVEEPEPKRRLKKDNSQSSDSVSKPGKKN. The WRKY 2 DNA-binding region spans 325 to 390; that stretch reads GDVGICGDGY…YKGVHNHDMP (66 aa). Positions 356, 361, 385, and 387 each coordinate Zn(2+). Residues 410 to 439 form a disordered region; sequence TSMRTRTDDQVNIPTSSQCSVGRESEKQSK. A compositionally biased stretch (polar residues) spans 419–429; sequence QVNIPTSSQCS.

Belongs to the WRKY group I family.

The protein localises to the nucleus. Functionally, transcription factor. Interacts specifically with the W box (5'-(T)TGAC[CT]-3'), a frequently occurring elicitor-responsive cis-acting element. This chain is Probable WRKY transcription factor 32 (WRKY32), found in Arabidopsis thaliana (Mouse-ear cress).